Here is a 318-residue protein sequence, read N- to C-terminus: Pantothenate kinase (318 aa).

Residue 96–103 (GSVAVGKS) participates in ATP binding.

Belongs to the prokaryotic pantothenate kinase family.

It is found in the cytoplasm. The enzyme catalyses (R)-pantothenate + ATP = (R)-4'-phosphopantothenate + ADP + H(+). It functions in the pathway cofactor biosynthesis; coenzyme A biosynthesis; CoA from (R)-pantothenate: step 1/5. This Coxiella burnetii (strain CbuK_Q154) (Coxiella burnetii (strain Q154)) protein is Pantothenate kinase.